We begin with the raw amino-acid sequence, 214 residues long: Orotate phosphoribosyltransferase (214 aa).

Position 26 (lysine 26) interacts with 5-phospho-alpha-D-ribose 1-diphosphate. Residue 34 to 35 participates in orotate binding; sequence FF. 5-phospho-alpha-D-ribose 1-diphosphate contacts are provided by residues 72 to 73, arginine 99, lysine 100, lysine 103, histidine 105, and 124 to 132; these read YK and DDVITAGTA. Orotate-binding residues include threonine 128 and arginine 156.

Belongs to the purine/pyrimidine phosphoribosyltransferase family. PyrE subfamily. Homodimer. Mg(2+) is required as a cofactor.

It catalyses the reaction orotidine 5'-phosphate + diphosphate = orotate + 5-phospho-alpha-D-ribose 1-diphosphate. The protein operates within pyrimidine metabolism; UMP biosynthesis via de novo pathway; UMP from orotate: step 1/2. Its function is as follows. Catalyzes the transfer of a ribosyl phosphate group from 5-phosphoribose 1-diphosphate to orotate, leading to the formation of orotidine monophosphate (OMP). The chain is Orotate phosphoribosyltransferase from Pasteurella multocida (strain Pm70).